Reading from the N-terminus, the 63-residue chain is Conotoxin Pu5.4 (63 aa).

The N-terminal stretch at 1 to 22 (MRCVPVFVILLLLIASTPSVDA) is a signal peptide. The propeptide occupies 23-50 (TQKTKDDMSLASFHDNAKRFLQTLRNTR). The residue at position 62 (W62) is a Tryptophan amide.

It belongs to the conotoxin T superfamily. Post-translationally, contains 2 disulfide bonds that can be either 'C1-C3, C2-C4' or 'C1-C4, C2-C3', since these disulfide connectivities have been observed for conotoxins with cysteine framework V (for examples, see AC P0DQQ7 and AC P81755). Expressed by the venom duct.

It localises to the secreted. The sequence is that of Conotoxin Pu5.4 from Conus pulicarius (Flea-bitten cone).